A 287-amino-acid chain; its full sequence is Pyridoxal kinase PdxY (287 aa).

Substrate is bound by residues serine 10 and 45 to 46 (TQ). Residues aspartate 112, alanine 144, glutamate 149, lysine 182, and 209 to 212 (RPLV) each bind ATP. Aspartate 224 contributes to the substrate binding site.

The protein belongs to the pyridoxine kinase family. PdxY subfamily. In terms of assembly, homodimer. Mg(2+) is required as a cofactor.

It catalyses the reaction pyridoxal + ATP = pyridoxal 5'-phosphate + ADP + H(+). Its pathway is cofactor metabolism; pyridoxal 5'-phosphate salvage; pyridoxal 5'-phosphate from pyridoxal: step 1/1. Functionally, pyridoxal kinase involved in the salvage pathway of pyridoxal 5'-phosphate (PLP). Catalyzes the phosphorylation of pyridoxal to PLP. In Escherichia coli O6:H1 (strain CFT073 / ATCC 700928 / UPEC), this protein is Pyridoxal kinase PdxY.